A 201-amino-acid polypeptide reads, in one-letter code: Holliday junction branch migration complex subunit RuvA (201 aa).

Residues 1-64 (MFAYIKGVLA…EFSHTLYGFL (64 aa)) are domain I. Residues 65–143 (SYQERDIFEI…AIGHLDTSDH (79 aa)) are domain II. Residues 144–153 (IEPLTQDPKS) are flexible linker. Positions 153-201 (SKSVQDAMLALINLGYNQTTAQKAIKQGMKELPEEIDLAQLITVALKHV) are domain III.

It belongs to the RuvA family. As to quaternary structure, homotetramer. Forms an RuvA(8)-RuvB(12)-Holliday junction (HJ) complex. HJ DNA is sandwiched between 2 RuvA tetramers; dsDNA enters through RuvA and exits via RuvB. An RuvB hexamer assembles on each DNA strand where it exits the tetramer. Each RuvB hexamer is contacted by two RuvA subunits (via domain III) on 2 adjacent RuvB subunits; this complex drives branch migration. In the full resolvosome a probable DNA-RuvA(4)-RuvB(12)-RuvC(2) complex forms which resolves the HJ.

The protein localises to the cytoplasm. The RuvA-RuvB-RuvC complex processes Holliday junction (HJ) DNA during genetic recombination and DNA repair, while the RuvA-RuvB complex plays an important role in the rescue of blocked DNA replication forks via replication fork reversal (RFR). RuvA specifically binds to HJ cruciform DNA, conferring on it an open structure. The RuvB hexamer acts as an ATP-dependent pump, pulling dsDNA into and through the RuvAB complex. HJ branch migration allows RuvC to scan DNA until it finds its consensus sequence, where it cleaves and resolves the cruciform DNA. This Protochlamydia amoebophila (strain UWE25) protein is Holliday junction branch migration complex subunit RuvA.